We begin with the raw amino-acid sequence, 66 residues long: uncharacterized protein (66 aa).

This is an uncharacterized protein from Vertebrata (FPV).